The sequence spans 99 residues: Protein RnfH (99 aa).

Belongs to the UPF0125 (RnfH) family.

In Tolumonas auensis (strain DSM 9187 / NBRC 110442 / TA 4), this protein is Protein RnfH.